The chain runs to 339 residues: MSSKAPKKSKQRSQPRNRTPNTSVKTVAIPFAKTQIIKTVNPPPKPARGILHTQLVMSVVGSVQMRTNNGKSNQRFRLNPSNPALFPTLAYEAANYDMYRLKKLTLRYVPLVTVQNSGRVAMIWDPDSQDSAPQSRQEISAYSRSVSTAVYEKCSLTIPADNQWRFVADNTTVDRKLVDFGQLLFVTHSGSDGIETGDIFLDCEVEFKGPQPTASIVQKTVIDLGGTLTSFEGPSYLMPPDAFITSSSFGLFVDVAGTYLLTLVVTCSTTGSVTVGGNSTLVGDGRAAYGSSNYIASIVFTSSGVLSTTPSVQFSGSSGVSRVQMNICRCKQGNTFILG.

The segment covering 1–15 has biased composition (basic residues); it reads MSSKAPKKSKQRSQP. A disordered region spans residues 1–24; it reads MSSKAPKKSKQRSQPRNRTPNTSV. The tract at residues 1–46 is r domain, interaction with RNA; it reads MSSKAPKKSKQRSQPRNRTPNTSVKTVAIPFAKTQIIKTVNPPPKP. Residues 47-207 are s domain, virion shell; sequence ARGILHTQLV…DIFLDCEVEF (161 aa). The p domain, projecting stretch occupies residues 208 to 339; it reads KGPQPTASIV…CKQGNTFILG (132 aa).

Belongs to the icosahedral plant coat protein family. In terms of assembly, homomultimer.

It localises to the virion. Capsid protein self-assembles to form an icosahedral capsid with a T=3 symmetry, about 31-34 nm in diameter, and consisting of 180 capsid proteins. Plays an essential role in virion formation by interacting, via its N-terminal region, with the bipartite viral RNA genome and specifically with the 3' terminus of RNA-1 and the TA element on RNA-2. Also participates in symptom development, viral RNA accumulation and systemic movement within the host. The chain is Capsid protein from Medicago sativa (Alfalfa).